The sequence spans 545 residues: Purple acid phosphatase 13 (545 aa).

Residues 1-25 form the signal peptide; sequence MVVKYTMSMSFFVIFASTVTIIVHG. 2 N-linked (GlcNAc...) asparagine glycosylation sites follow: asparagine 125 and asparagine 145. Residue aspartate 203 coordinates Fe cation. N-linked (GlcNAc...) asparagine glycosylation is present at asparagine 209. Tyrosine 233 lines the Fe cation pocket. N-linked (GlcNAc...) asparagine glycans are attached at residues asparagine 240, asparagine 254, asparagine 306, asparagine 321, asparagine 351, and asparagine 367. Histidine 389 serves as the catalytic Proton donor. Residue histidine 416 participates in Zn(2+) binding. 416–418 contributes to the substrate binding site; the sequence is HVD. N-linked (GlcNAc...) asparagine glycosylation is found at asparagine 428, asparagine 466, asparagine 475, and asparagine 510.

Belongs to the metallophosphoesterase superfamily. Purple acid phosphatase family. Homodimer. Fe cation is required as a cofactor. It depends on Zn(2+) as a cofactor. As to expression, expressed in stems, leaves, flowers and siliques.

It localises to the secreted. The enzyme catalyses a phosphate monoester + H2O = an alcohol + phosphate. The chain is Purple acid phosphatase 13 (PAP13) from Arabidopsis thaliana (Mouse-ear cress).